Reading from the N-terminus, the 353-residue chain is MTAILERRESENLWGRFCNWITSTENRLYIGWFGVLMIPTLLTATSVFIIAFIAAPPVDIDGIREPVSGSLLYGNNIISGAIIPTSAAIGLHFYPIWEAASVDEWLYNGGPYELIVLHFLLGVACYMGREWELSFRLGMRPWIAVAYSAPVAAATAVFLIYPIGQGSFSDGMPLGISGTFNFMIVFQAEHNILMHPFHMLGVAGVFGGSLFSAMHGSLVTSSLIRETTENESANEGYRFGQEEETYNIVAAHGYFGRLIFQYASFNNSRSLHFFLAAWPVVGIWFTALGISTMAFNLNGFNFNQSVVDSQGRVINTWADIINRANLGMEVMHERNAHNFPLDLAAIEAPATNG.

Thr2 carries the post-translational modification N-acetylthreonine. At Thr2 the chain carries Phosphothreonine. The next 3 membrane-spanning stretches (helical) occupy residues 29-46 (YIGW…TATS), 118-133 (HFLL…EWEL), and 142-156 (WIAV…AATA). His118 provides a ligand contact to chlorophyll a. Tyr126 lines the pheophytin a pocket. The [CaMn4O5] cluster site is built by Asp170 and Glu189. Residues 197-218 (FHMLGVAGVFGGSLFSAMHGSL) form a helical membrane-spanning segment. His198 is a binding site for chlorophyll a. A quinone contacts are provided by residues His215 and 264–265 (SF). His215 is a binding site for Fe cation. His272 contacts Fe cation. The chain crosses the membrane as a helical span at residues 274–288 (FLAAWPVVGIWFTAL). Positions 332, 333, 342, and 344 each coordinate [CaMn4O5] cluster. A propeptide spanning residues 345 to 353 (AIEAPATNG) is cleaved from the precursor.

It belongs to the reaction center PufL/M/PsbA/D family. In terms of assembly, PSII is composed of 1 copy each of membrane proteins PsbA, PsbB, PsbC, PsbD, PsbE, PsbF, PsbH, PsbI, PsbJ, PsbK, PsbL, PsbM, PsbT, PsbX, PsbY, PsbZ, Psb30/Ycf12, at least 3 peripheral proteins of the oxygen-evolving complex and a large number of cofactors. It forms dimeric complexes. The D1/D2 heterodimer binds P680, chlorophylls that are the primary electron donor of PSII, and subsequent electron acceptors. It shares a non-heme iron and each subunit binds pheophytin, quinone, additional chlorophylls, carotenoids and lipids. D1 provides most of the ligands for the Mn4-Ca-O5 cluster of the oxygen-evolving complex (OEC). There is also a Cl(-1) ion associated with D1 and D2, which is required for oxygen evolution. The PSII complex binds additional chlorophylls, carotenoids and specific lipids. serves as cofactor. Tyr-161 forms a radical intermediate that is referred to as redox-active TyrZ, YZ or Y-Z. In terms of processing, C-terminally processed by CTPA; processing is essential to allow assembly of the oxygen-evolving complex and thus photosynthetic growth.

It is found in the plastid membrane. It catalyses the reaction 2 a plastoquinone + 4 hnu + 2 H2O = 2 a plastoquinol + O2. In terms of biological role, photosystem II (PSII) is a light-driven water:plastoquinone oxidoreductase that uses light energy to abstract electrons from H(2)O, generating O(2) and a proton gradient subsequently used for ATP formation. It consists of a core antenna complex that captures photons, and an electron transfer chain that converts photonic excitation into a charge separation. The D1/D2 (PsbA/PsbD) reaction center heterodimer binds P680, the primary electron donor of PSII as well as several subsequent electron acceptors. In Cuscuta exaltata (Tall dodder), this protein is Photosystem II protein D1.